A 360-amino-acid chain; its full sequence is Phospho-N-acetylmuramoyl-pentapeptide-transferase (360 aa).

Transmembrane regions (helical) follow at residues 26 to 46 (AILGVMTALGLSLLLGPWVIN), 70 to 90 (GTPTMGGTLILFAIVFATLLW), 97 to 117 (YVLAVLFVTLSFGLVGWVDDY), 134 to 154 (YFWQSLAGFTVAYGLYVTAQI), 167 to 187 (GVALELGVFYIILTYFMVVGF), 199 to 219 (GLAIMPTVMVGSALGIIAYLV), 236 to 256 (AGELVVYCAALAGAGLGFLWF), 263 to 283 (VFMGDVGALALGAALGIIAVI), 288 to 308 (IVFIIMSGIFVMETVSVILQV), and 338 to 358 (VIVRFWIITVMLVLFGLATLK).

It belongs to the glycosyltransferase 4 family. MraY subfamily. It depends on Mg(2+) as a cofactor.

The protein resides in the cell inner membrane. It catalyses the reaction UDP-N-acetyl-alpha-D-muramoyl-L-alanyl-gamma-D-glutamyl-meso-2,6-diaminopimeloyl-D-alanyl-D-alanine + di-trans,octa-cis-undecaprenyl phosphate = di-trans,octa-cis-undecaprenyl diphospho-N-acetyl-alpha-D-muramoyl-L-alanyl-D-glutamyl-meso-2,6-diaminopimeloyl-D-alanyl-D-alanine + UMP. The protein operates within cell wall biogenesis; peptidoglycan biosynthesis. Functionally, catalyzes the initial step of the lipid cycle reactions in the biosynthesis of the cell wall peptidoglycan: transfers peptidoglycan precursor phospho-MurNAc-pentapeptide from UDP-MurNAc-pentapeptide onto the lipid carrier undecaprenyl phosphate, yielding undecaprenyl-pyrophosphoryl-MurNAc-pentapeptide, known as lipid I. The protein is Phospho-N-acetylmuramoyl-pentapeptide-transferase of Saccharophagus degradans (strain 2-40 / ATCC 43961 / DSM 17024).